The following is a 121-amino-acid chain: Large ribosomal subunit protein uL22 (121 aa).

The protein belongs to the universal ribosomal protein uL22 family. Part of the 50S ribosomal subunit.

In terms of biological role, this protein binds specifically to 23S rRNA; its binding is stimulated by other ribosomal proteins, e.g. L4, L17, and L20. It is important during the early stages of 50S assembly. It makes multiple contacts with different domains of the 23S rRNA in the assembled 50S subunit and ribosome. Its function is as follows. The globular domain of the protein is located near the polypeptide exit tunnel on the outside of the subunit, while an extended beta-hairpin is found that lines the wall of the exit tunnel in the center of the 70S ribosome. This is Large ribosomal subunit protein uL22 from Salinibacter ruber (strain DSM 13855 / M31).